The primary structure comprises 130 residues: Astrocytic phosphoprotein PEA-15 (130 aa).

Positions 3–81 constitute a DED domain; it reads EYGTLLQDLT…RPDLLTMVVD (79 aa). Ser61, Ser90, Ser104, and Ser116 each carry phosphoserine. The tract at residues 98-107 is microtubule-binding; the sequence is KLTRIPSAKK. A microtubule-binding region spans residues 122–129; it reads KLAPPPKK.

In terms of assembly, binds RPS6KA3, MAPK3 and MAPK1. Transient interaction with PLD1 and PLD2. Interacts with CASP8 and FADD. In terms of processing, phosphorylated by protein kinase C and calcium-calmodulin-dependent protein kinase. These phosphorylation events are modulated by neurotransmitters or hormones. Ubiquitously expressed. Most abundant in tissues such as heart, brain, muscle and adipose tissue which utilize glucose as an energy source. Lower expression in glucose-producing tissues. Higher levels of expression are found in tissues from individuals with type 2 diabetes than in controls.

The protein resides in the cytoplasm. In terms of biological role, blocks Ras-mediated inhibition of integrin activation and modulates the ERK MAP kinase cascade. Inhibits RPS6KA3 activities by retaining it in the cytoplasm. Inhibits both TNFRSF6- and TNFRSF1A-mediated CASP8 activity and apoptosis. Regulates glucose transport by controlling both the content of SLC2A1 glucose transporters on the plasma membrane and the insulin-dependent trafficking of SLC2A4 from the cell interior to the surface. The chain is Astrocytic phosphoprotein PEA-15 (PEA15) from Homo sapiens (Human).